Here is a 101-residue protein sequence, read N- to C-terminus: Urease subunit gamma (101 aa).

The protein belongs to the urease gamma subunit family. As to quaternary structure, heterotrimer of UreA (gamma), UreB (beta) and UreC (alpha) subunits. Three heterotrimers associate to form the active enzyme.

Its subcellular location is the cytoplasm. The enzyme catalyses urea + 2 H2O + H(+) = hydrogencarbonate + 2 NH4(+). It functions in the pathway nitrogen metabolism; urea degradation; CO(2) and NH(3) from urea (urease route): step 1/1. The chain is Urease subunit gamma from Ureaplasma parvum serovar 3 (strain ATCC 27815 / 27 / NCTC 11736).